Here is a 328-residue protein sequence, read N- to C-terminus: tRNA dimethylallyltransferase (328 aa).

25-32 is an ATP binding site; that stretch reads GPTAVGKT. Position 27-32 (27-32) interacts with substrate; that stretch reads TAVGKT. The tract at residues 50–53 is interaction with substrate tRNA; sequence DSMQ.

The protein belongs to the IPP transferase family. As to quaternary structure, monomer. Mg(2+) serves as cofactor.

The catalysed reaction is adenosine(37) in tRNA + dimethylallyl diphosphate = N(6)-dimethylallyladenosine(37) in tRNA + diphosphate. Catalyzes the transfer of a dimethylallyl group onto the adenine at position 37 in tRNAs that read codons beginning with uridine, leading to the formation of N6-(dimethylallyl)adenosine (i(6)A). This is tRNA dimethylallyltransferase from Halothermothrix orenii (strain H 168 / OCM 544 / DSM 9562).